Here is a 255-residue protein sequence, read N- to C-terminus: MTIQLSVNVNKIAVLRNSRGGTDPDVLQAARTCIAAGAHGITVHPRPDQRHIRAGDVLALSALTREHAVEFNIEGNPFAPPRAGYPGLLELCRATRPEQITLVPDGDGQLTSDHGFDFAQDTTQLAELIAAFKAVGSRVSLFVDAGNPDIAGAAALGADRVELYTGPYAHAHASGQTDTALALFADAGRRASAAGLGINAGHDLSQANLGDFLAAVPGVLEVSIGHALISEALYQGLEATVRAYVDILRGSQVGA.

Residues Asn8 and Arg19 each coordinate 3-amino-2-oxopropyl phosphate. The Proton acceptor role is filled by His44. Residues Arg46 and His51 each contribute to the 1-deoxy-D-xylulose 5-phosphate site. The active-site Proton acceptor is the Glu74. Thr111 provides a ligand contact to 1-deoxy-D-xylulose 5-phosphate. His202 acts as the Proton donor in catalysis. 3-amino-2-oxopropyl phosphate is bound by residues Asp203 and 225-226; that span reads GH.

Belongs to the PNP synthase family. In terms of assembly, homooctamer; tetramer of dimers.

It localises to the cytoplasm. It catalyses the reaction 3-amino-2-oxopropyl phosphate + 1-deoxy-D-xylulose 5-phosphate = pyridoxine 5'-phosphate + phosphate + 2 H2O + H(+). Its pathway is cofactor biosynthesis; pyridoxine 5'-phosphate biosynthesis; pyridoxine 5'-phosphate from D-erythrose 4-phosphate: step 5/5. In terms of biological role, catalyzes the complicated ring closure reaction between the two acyclic compounds 1-deoxy-D-xylulose-5-phosphate (DXP) and 3-amino-2-oxopropyl phosphate (1-amino-acetone-3-phosphate or AAP) to form pyridoxine 5'-phosphate (PNP) and inorganic phosphate. The chain is Pyridoxine 5'-phosphate synthase from Xanthomonas oryzae pv. oryzae (strain MAFF 311018).